Reading from the N-terminus, the 412-residue chain is Multifunctional CCA protein (412 aa).

ATP contacts are provided by glycine 8 and arginine 11. Residues glycine 8 and arginine 11 each contribute to the CTP site. Mg(2+)-binding residues include aspartate 21 and aspartate 23. The ATP site is built by arginine 91, arginine 137, and arginine 140. CTP contacts are provided by arginine 91, arginine 137, and arginine 140. The region spanning 228–329 (TGIHTLMTLS…VKLFDSIDAW (102 aa)) is the HD domain.

It belongs to the tRNA nucleotidyltransferase/poly(A) polymerase family. Bacterial CCA-adding enzyme type 1 subfamily. Monomer. Can also form homodimers and oligomers. The cofactor is Mg(2+). Ni(2+) serves as cofactor.

The enzyme catalyses a tRNA precursor + 2 CTP + ATP = a tRNA with a 3' CCA end + 3 diphosphate. The catalysed reaction is a tRNA with a 3' CCA end + 2 CTP + ATP = a tRNA with a 3' CCACCA end + 3 diphosphate. Functionally, catalyzes the addition and repair of the essential 3'-terminal CCA sequence in tRNAs without using a nucleic acid template. Adds these three nucleotides in the order of C, C, and A to the tRNA nucleotide-73, using CTP and ATP as substrates and producing inorganic pyrophosphate. tRNA 3'-terminal CCA addition is required both for tRNA processing and repair. Also involved in tRNA surveillance by mediating tandem CCA addition to generate a CCACCA at the 3' terminus of unstable tRNAs. While stable tRNAs receive only 3'-terminal CCA, unstable tRNAs are marked with CCACCA and rapidly degraded. This Escherichia coli O139:H28 (strain E24377A / ETEC) protein is Multifunctional CCA protein.